The following is a 467-amino-acid chain: Glutamate--tRNA ligase (467 aa).

The short motif at 12–22 (PSPTGYLHIGG) is the 'HIGH' region element. Basic and acidic residues predominate over residues 114-128 (EQEAKKEKPRYDGRW). The disordered stretch occupies residues 114–140 (EQEAKKEKPRYDGRWRPAPGKTLPTPP). The short motif at 244 to 248 (KLSKR) is the 'KMSKS' region element. Lys247 contributes to the ATP binding site.

This sequence belongs to the class-I aminoacyl-tRNA synthetase family. Glutamate--tRNA ligase type 1 subfamily. In terms of assembly, monomer.

It localises to the cytoplasm. It carries out the reaction tRNA(Glu) + L-glutamate + ATP = L-glutamyl-tRNA(Glu) + AMP + diphosphate. In terms of biological role, catalyzes the attachment of glutamate to tRNA(Glu) in a two-step reaction: glutamate is first activated by ATP to form Glu-AMP and then transferred to the acceptor end of tRNA(Glu). The chain is Glutamate--tRNA ligase from Azoarcus sp. (strain BH72).